The primary structure comprises 571 residues: Proline--tRNA ligase (571 aa).

It belongs to the class-II aminoacyl-tRNA synthetase family. ProS type 1 subfamily. Homodimer.

It localises to the cytoplasm. The enzyme catalyses tRNA(Pro) + L-proline + ATP = L-prolyl-tRNA(Pro) + AMP + diphosphate. Functionally, catalyzes the attachment of proline to tRNA(Pro) in a two-step reaction: proline is first activated by ATP to form Pro-AMP and then transferred to the acceptor end of tRNA(Pro). As ProRS can inadvertently accommodate and process non-cognate amino acids such as alanine and cysteine, to avoid such errors it has two additional distinct editing activities against alanine. One activity is designated as 'pretransfer' editing and involves the tRNA(Pro)-independent hydrolysis of activated Ala-AMP. The other activity is designated 'posttransfer' editing and involves deacylation of mischarged Ala-tRNA(Pro). The misacylated Cys-tRNA(Pro) is not edited by ProRS. This chain is Proline--tRNA ligase, found in Pediococcus pentosaceus (strain ATCC 25745 / CCUG 21536 / LMG 10740 / 183-1w).